Consider the following 490-residue polypeptide: Protein twist (490 aa).

3 disordered regions span residues 48 to 72 (QLQH…QHAQ), 96 to 165 (PSNE…TGGS), and 244 to 264 (QQQQ…HAQM). The span at 54–68 (QHLHSHQHHQQHHQQ) shows a compositional bias: basic residues. Composition is skewed to low complexity over residues 102-134 (STSS…NPSG) and 244-263 (QQQQ…SHAQ). Residues Ser-325 and Ser-328 each carry the phosphoserine modification. The segment at 330-361 (LDGSDAGGKAFRKPRRRLKRKPSKTEETDEFS) is disordered. Residues 339–351 (AFRKPRRRLKRKP) are compositionally biased toward basic residues. A bHLH domain is found at 362-413 (NQRVMANVRERQRTQSLNDAFKSLQQIIPTLPSDKLSKIQTLKLATRYIDFL).

Efficient DNA binding requires dimerization with another bHLH protein. Homodimer. Interacts with akirin. As to expression, expressed in embryonic abdomen; a single cell ventrally, pairs of cells laterally and three cells dorsally in each hemisegment. In the thorax, there are patches of cells associated with the imaginal disks. During larval development, cells proliferate and, in the abdomen, they form ventral, lateral and dorsal clusters, which are the precursors of the adult abdominal muscles. In the thorax, they form populations of cells in the imaginal disks that correspond to the adepithelial cells.

The protein resides in the nucleus. Involved in the establishment and dorsoventral patterning of germ layers in the embryo. The sequence is that of Protein twist (twi) from Drosophila melanogaster (Fruit fly).